We begin with the raw amino-acid sequence, 188 residues long: ATP synthase subunit b (188 aa).

A helical membrane pass occupies residues 5 to 25; sequence MLLIFMMIVMIASSAMAAEAE.

It belongs to the ATPase B chain family. As to quaternary structure, F-type ATPases have 2 components, F(1) - the catalytic core - and F(0) - the membrane proton channel. F(1) has five subunits: alpha(3), beta(3), gamma(1), delta(1), epsilon(1). F(0) has three main subunits: a(1), b(2) and c(10-14). The alpha and beta chains form an alternating ring which encloses part of the gamma chain. F(1) is attached to F(0) by a central stalk formed by the gamma and epsilon chains, while a peripheral stalk is formed by the delta and b chains.

Its subcellular location is the cell inner membrane. Functionally, f(1)F(0) ATP synthase produces ATP from ADP in the presence of a proton or sodium gradient. F-type ATPases consist of two structural domains, F(1) containing the extramembraneous catalytic core and F(0) containing the membrane proton channel, linked together by a central stalk and a peripheral stalk. During catalysis, ATP synthesis in the catalytic domain of F(1) is coupled via a rotary mechanism of the central stalk subunits to proton translocation. Component of the F(0) channel, it forms part of the peripheral stalk, linking F(1) to F(0). This chain is ATP synthase subunit b, found in Thermodesulfovibrio yellowstonii (strain ATCC 51303 / DSM 11347 / YP87).